Reading from the N-terminus, the 183-residue chain is Microfibrillar-associated protein 2 (183 aa).

A signal peptide spans 1 to 17 (MRAASLFLLFLPAGLLA). Q18 is modified (pyrrolidone carboxylic acid). Q20 participates in a covalent cross-link: Isoglutamyl lysine isopeptide (Gln-Lys) (interchain with K-?). Sulfotyrosine occurs at positions 47, 48, and 50. Positions 153 to 183 (CRDKFSKCGVLASSGLCQSVAAACARSCGGC) constitute a ShKT domain. Intrachain disulfides connect C153/C183, C160/C176, and C169/C180.

This sequence belongs to the MFAP family. In terms of assembly, forms a ternary complex with BGN and ELN. Interacts with FBN1 (via N-terminal domain) and FBN2. O-glycosylated; glycans consist of Gal(beta1-3)GalNAc. Post-translationally, forms intermolecular disulfide bonds either with other MAGP-1 molecules or with other components of the microfibrils. In terms of processing, forms transglutaminase cross-links with tropoelastin.

It localises to the secreted. Its subcellular location is the extracellular space. The protein resides in the extracellular matrix. In terms of biological role, component of the elastin-associated microfibrils. This Bos taurus (Bovine) protein is Microfibrillar-associated protein 2 (MFAP2).